Consider the following 406-residue polypeptide: Pyruvate dehydrogenase E1 component subunit beta-3, chloroplastic (406 aa).

The N-terminal 70 residues, 1-70 (MSAILQGAGA…PLIPNAVTTK (70 aa)), are a transit peptide targeting the chloroplast. E142 serves as a coordination point for thiamine diphosphate. V195, A243, I244, and N248 together coordinate K(+).

Tetramer of 2 alpha and 2 beta subunits. Thiamine diphosphate is required as a cofactor.

Its subcellular location is the plastid. It is found in the chloroplast. It catalyses the reaction N(6)-[(R)-lipoyl]-L-lysyl-[protein] + pyruvate + H(+) = N(6)-[(R)-S(8)-acetyldihydrolipoyl]-L-lysyl-[protein] + CO2. The pyruvate dehydrogenase complex catalyzes the overall conversion of pyruvate to acetyl-CoA and CO(2). It contains multiple copies of three enzymatic components: pyruvate dehydrogenase (E1), dihydrolipoamide acetyltransferase (E2) and lipoamide dehydrogenase (E3). The polypeptide is Pyruvate dehydrogenase E1 component subunit beta-3, chloroplastic (E1-BETA-2) (Arabidopsis thaliana (Mouse-ear cress)).